The chain runs to 336 residues: Aspartate--ammonia ligase (336 aa).

This sequence belongs to the class-II aminoacyl-tRNA synthetase family. AsnA subfamily.

It is found in the cytoplasm. The enzyme catalyses L-aspartate + NH4(+) + ATP = L-asparagine + AMP + diphosphate + H(+). The protein operates within amino-acid biosynthesis; L-asparagine biosynthesis; L-asparagine from L-aspartate (ammonia route): step 1/1. This is Aspartate--ammonia ligase from Limosilactobacillus fermentum (strain NBRC 3956 / LMG 18251) (Lactobacillus fermentum).